Consider the following 409-residue polypeptide: Serine/threonine transporter SstT (409 aa).

9 consecutive transmembrane segments (helical) span residues 24–44 (LALG…AGLF), 48–68 (FVGA…AATI), 82–102 (IIVL…IAGM), 142–162 (AIAN…GAAL), 194–214 (LGIF…ALAG), 218–238 (LLAV…PAIV), 292–312 (IPLG…VLAM), 319–339 (GIQV…VSAC), and 365–385 (VAMQ…SAET).

Belongs to the dicarboxylate/amino acid:cation symporter (DAACS) (TC 2.A.23) family.

It localises to the cell inner membrane. It carries out the reaction L-serine(in) + Na(+)(in) = L-serine(out) + Na(+)(out). The catalysed reaction is L-threonine(in) + Na(+)(in) = L-threonine(out) + Na(+)(out). Functionally, involved in the import of serine and threonine into the cell, with the concomitant import of sodium (symport system). In Neisseria meningitidis serogroup C / serotype 2a (strain ATCC 700532 / DSM 15464 / FAM18), this protein is Serine/threonine transporter SstT.